The sequence spans 77 residues: Liver-expressed antimicrobial peptide 2 (77 aa).

An N-terminal signal peptide occupies residues 1–22 (MWHLKLFAVLMICLLLLAQVDG). The propeptide occupies 23 to 37 (SPIPQQSSAKRRPRR). 2 disulfide bridges follow: cysteine 54–cysteine 65 and cysteine 60–cysteine 70.

This sequence belongs to the LEAP2 family.

The protein resides in the secreted. Functionally, has an antimicrobial activity. The polypeptide is Liver-expressed antimicrobial peptide 2 (LEAP2) (Bos taurus (Bovine)).